The following is a 136-amino-acid chain: uncharacterized protein (136 aa).

This is an uncharacterized protein from Fowl adenovirus A serotype 1 (strain CELO / Phelps) (FAdV-1).